The chain runs to 206 residues: dITP/XTP pyrophosphatase (206 aa).

Residue 7 to 12 participates in substrate binding; the sequence is SRNPKK. The Proton acceptor role is filled by aspartate 72. Aspartate 72 provides a ligand contact to Mg(2+). Substrate contacts are provided by residues serine 73, 155–158, lysine 178, and 183–184; these read FGYD and HR.

Belongs to the HAM1 NTPase family. As to quaternary structure, homodimer. Requires Mg(2+) as cofactor.

It catalyses the reaction XTP + H2O = XMP + diphosphate + H(+). The catalysed reaction is dITP + H2O = dIMP + diphosphate + H(+). The enzyme catalyses ITP + H2O = IMP + diphosphate + H(+). Functionally, pyrophosphatase that catalyzes the hydrolysis of nucleoside triphosphates to their monophosphate derivatives, with a high preference for the non-canonical purine nucleotides XTP (xanthosine triphosphate), dITP (deoxyinosine triphosphate) and ITP. Seems to function as a house-cleaning enzyme that removes non-canonical purine nucleotides from the nucleotide pool, thus preventing their incorporation into DNA/RNA and avoiding chromosomal lesions. This Mycobacteroides abscessus (strain ATCC 19977 / DSM 44196 / CCUG 20993 / CIP 104536 / JCM 13569 / NCTC 13031 / TMC 1543 / L948) (Mycobacterium abscessus) protein is dITP/XTP pyrophosphatase.